The primary structure comprises 105 residues: Thioredoxin (105 aa).

The Thioredoxin domain occupies 1-105 (MVNNVTDSSF…SLLDWINKSI (105 aa)). A disulfide bridge connects residues Cys-30 and Cys-33.

Belongs to the thioredoxin family.

Its function is as follows. Component of the thioredoxin-thioredoxin reductase system. Participates in various redox reactions through the reversible oxidation of its active center dithiol to a disulfide and catalyzes dithiol-disulfide exchange reactions. In Rickettsia prowazekii (strain Madrid E), this protein is Thioredoxin (trxA).